The following is a 199-amino-acid chain: Recombination protein RecR (199 aa).

Residues 57-72 (CSICGNITEDDPCDIC) form a C4-type zinc finger. One can recognise a Toprim domain in the interval 80–176 (KAVLVVEDSK…KVTRLAHGLS (97 aa)).

The protein belongs to the RecR family.

Functionally, may play a role in DNA repair. It seems to be involved in an RecBC-independent recombinational process of DNA repair. It may act with RecF and RecO. The polypeptide is Recombination protein RecR (Pediococcus pentosaceus (strain ATCC 25745 / CCUG 21536 / LMG 10740 / 183-1w)).